The chain runs to 214 residues: DELTA-actitoxin-Aeq1a (214 aa).

The signal sequence occupies residues Met-1–Ala-19. Positions Leu-20–Arg-35 are excised as a propeptide. The tract at residues Asp-38–Ala-47 is plays an important role in the hemolytic activity. Residues Gly-46–Lys-65 are N-terminal region. Residues Ser-89, Val-122, Ser-140, Pro-142, Tyr-168, Tyr-172, and Tyr-173 each contribute to the phosphocholine site. The segment at Ser-140 to Arg-155 is trp-rich region, which is important for the binding to lipid membrane. Residues Arg-179–Asp-181 carry the Cell attachment site, crucial for protein stability motif.

Belongs to the actinoporin family. Sea anemone subfamily. As to quaternary structure, octamer or nonamer in membranes. Monomer in the soluble state.

It is found in the secreted. The protein resides in the nematocyst. Its subcellular location is the target cell membrane. In terms of biological role, pore-forming protein that forms cations-selective hydrophilic pores of around 1 nm and causes cardiac stimulation and cytolysis. Pore formation is a multi-step process that involves specific recognition of membrane sphingomyelin (but neither cholesterol nor phosphatidylcholine) using aromatic rich region and adjacent phosphocholine (POC) binding site, firm binding to the membrane (mainly driven by hydrophobic interactions) accompanied by the transfer of the N-terminal region to the lipid-water interface and finally pore formation after oligomerization of monomers. Cytolytic effects include red blood cells hemolysis, platelet aggregation and lysis, cytotoxic and cytostatic effects on fibroblasts. Lethality in mammals has been ascribed to severe vasospasm of coronary vessels, cardiac arrhythmia, and inotropic effects. This is DELTA-actitoxin-Aeq1a from Actinia equina (Beadlet anemone).